A 59-amino-acid chain; its full sequence is Small ribosomal subunit protein eS17 (59 aa).

Belongs to the eukaryotic ribosomal protein eS17 family.

The protein is Small ribosomal subunit protein eS17 of Halobacterium salinarum (strain ATCC 29341 / DSM 671 / R1).